The following is a 374-amino-acid chain: UDP-N-acetylglucosamine--N-acetylmuramyl-(pentapeptide) pyrophosphoryl-undecaprenol N-acetylglucosamine transferase (374 aa).

UDP-N-acetyl-alpha-D-glucosamine-binding positions include 13–15 (TGG), N124, R165, S193, and Q294.

Belongs to the glycosyltransferase 28 family. MurG subfamily.

The protein localises to the cell inner membrane. The enzyme catalyses di-trans,octa-cis-undecaprenyl diphospho-N-acetyl-alpha-D-muramoyl-L-alanyl-D-glutamyl-meso-2,6-diaminopimeloyl-D-alanyl-D-alanine + UDP-N-acetyl-alpha-D-glucosamine = di-trans,octa-cis-undecaprenyl diphospho-[N-acetyl-alpha-D-glucosaminyl-(1-&gt;4)]-N-acetyl-alpha-D-muramoyl-L-alanyl-D-glutamyl-meso-2,6-diaminopimeloyl-D-alanyl-D-alanine + UDP + H(+). Its pathway is cell wall biogenesis; peptidoglycan biosynthesis. Functionally, cell wall formation. Catalyzes the transfer of a GlcNAc subunit on undecaprenyl-pyrophosphoryl-MurNAc-pentapeptide (lipid intermediate I) to form undecaprenyl-pyrophosphoryl-MurNAc-(pentapeptide)GlcNAc (lipid intermediate II). This Rhizobium johnstonii (strain DSM 114642 / LMG 32736 / 3841) (Rhizobium leguminosarum bv. viciae) protein is UDP-N-acetylglucosamine--N-acetylmuramyl-(pentapeptide) pyrophosphoryl-undecaprenol N-acetylglucosamine transferase.